Here is a 107-residue protein sequence, read N- to C-terminus: Large ribosomal subunit protein eL33A (107 aa).

An N-acetylalanine; partial modification is found at alanine 2. Lysine 47 is covalently cross-linked (Glycyl lysine isopeptide (Lys-Gly) (interchain with G-Cter in ubiquitin)).

Belongs to the eukaryotic ribosomal protein eL33 family. As to quaternary structure, component of the large ribosomal subunit (LSU). Mature yeast ribosomes consist of a small (40S) and a large (60S) subunit. The 40S small subunit contains 1 molecule of ribosomal RNA (18S rRNA) and 33 different proteins (encoded by 57 genes). The large 60S subunit contains 3 rRNA molecules (25S, 5.8S and 5S rRNA) and 46 different proteins (encoded by 81 genes). Post-translationally, N-terminally acetylated by acetyltransferase NatA.

The protein resides in the cytoplasm. Its function is as follows. Component of the ribosome, a large ribonucleoprotein complex responsible for the synthesis of proteins in the cell. The small ribosomal subunit (SSU) binds messenger RNAs (mRNAs) and translates the encoded message by selecting cognate aminoacyl-transfer RNA (tRNA) molecules. The large subunit (LSU) contains the ribosomal catalytic site termed the peptidyl transferase center (PTC), which catalyzes the formation of peptide bonds, thereby polymerizing the amino acids delivered by tRNAs into a polypeptide chain. The nascent polypeptides leave the ribosome through a tunnel in the LSU and interact with protein factors that function in enzymatic processing, targeting, and the membrane insertion of nascent chains at the exit of the ribosomal tunnel. The polypeptide is Large ribosomal subunit protein eL33A (Saccharomyces cerevisiae (strain ATCC 204508 / S288c) (Baker's yeast)).